Reading from the N-terminus, the 218-residue chain is Probable nicotinate-nucleotide adenylyltransferase (218 aa).

It belongs to the NadD family.

The enzyme catalyses nicotinate beta-D-ribonucleotide + ATP + H(+) = deamido-NAD(+) + diphosphate. The protein operates within cofactor biosynthesis; NAD(+) biosynthesis; deamido-NAD(+) from nicotinate D-ribonucleotide: step 1/1. Its function is as follows. Catalyzes the reversible adenylation of nicotinate mononucleotide (NaMN) to nicotinic acid adenine dinucleotide (NaAD). The protein is Probable nicotinate-nucleotide adenylyltransferase of Sodalis glossinidius (strain morsitans).